The following is a 699-amino-acid chain: Cyclic AMP-dependent transcription factor ATF-6 beta (699 aa).

Ala2 carries the post-translational modification N-acetylalanine. The Cytoplasmic portion of the chain corresponds to 2–393 (AELMLLSEIA…GLKLGSGNRK (392 aa)). Disordered stretches follow at residues 59-114 (SLDV…QVPG), 218-246 (VQIS…PKPV), and 290-313 (EGPA…PGNS). The segment covering 68 to 78 (PPEPPWDPLPI) has biased composition (pro residues). The span at 86–109 (SEPSSPCSSSSLSSESSHLSTEPP) shows a compositional bias: low complexity. Positions 322–385 (LLKRQQRMIK…EALLAENSGL (64 aa)) constitute a bZIP domain. Residues 324–344 (KRQQRMIKNRESACQSRRKKK) form a basic motif region. The interval 347–354 (LQGLEARL) is leucine-zipper. Residues 394–414 (VVCIMVFLLFIAFNFGPVSIS) form a helical; Signal-anchor for type II membrane protein membrane-spanning segment. The Lumenal portion of the chain corresponds to 415 to 699 (EPPPAPMSPR…ASQPLYLNHP (285 aa)). Residues 417 to 474 (PPAPMSPRMSREEPRPQRHLLGFSEPGPAHGMEPLREAAQSPGEQQPSSAGRPSFRNL) form a disordered region. Positions 458–467 (PGEQQPSSAG) are enriched in polar residues. N-linked (GlcNAc...) asparagine glycans are attached at residues Asn473 and Asn502. Residues 519–529 (RHQRGRRKIPH) show a composition bias toward basic residues. The interval 519-563 (RHQRGRRKIPHRAQERQKSQLRKKSPPVKPVPTQPPGPPERDPVG) is disordered. Over residues 545 to 556 (PVKPVPTQPPGP) the composition is skewed to pro residues. 3 N-linked (GlcNAc...) asparagine glycosylation sites follow: Asn607, Asn624, and Asn673. Residues 657–699 (STVPPSLRKQPSPSPGNTTGGPLPGSAASPAHQASQPLYLNHP) are disordered. The span at 680 to 693 (PGSAASPAHQASQP) shows a compositional bias: low complexity.

It belongs to the bZIP family. ATF subfamily. Homodimer and heterodimer with ATF6-alpha. The dimer interacts with the nuclear transcription factor Y (NF-Y) trimer through direct binding to NF-Y subunit C (NF-YC). N-glycosylated. Post-translationally, during unfolded protein response, a fragment of approximately 60 kDa containing the cytoplasmic transcription factor domain is released by proteolysis. The cleavage is probably performed sequentially by site-1 (MBTPS1, S1P) and site-2 (MBTPS2, S2P) proteases.

It localises to the endoplasmic reticulum membrane. Its subcellular location is the nucleus. Precursor of the transcription factor form (Processed cyclic AMP-dependent transcription factor ATF-6 beta), which is embedded in the endoplasmic reticulum membrane. Endoplasmic reticulum stress promotes processing of this form, releasing the transcription factor form that translocates into the nucleus, where it activates transcription of genes involved in the unfolded protein response (UPR). Its function is as follows. Transcription factor that acts in the unfolded protein response (UPR) pathway by activating UPR target genes induced during ER stress. Binds DNA on the 5'-CCAC[GA]-3' half of the ER stress response element (ERSE) (5'-CCAATN(9)CCAC[GA]-3') when NF-Y is bound to ERSE. The chain is Cyclic AMP-dependent transcription factor ATF-6 beta (Atf6b) from Mus musculus (Mouse).